A 378-amino-acid polypeptide reads, in one-letter code: Forkhead box protein F1 (378 aa).

Residues 1-45 are disordered; the sequence is MSAPDKQQPPHGGGTGGGGGAGGQAMDPAAAGPTKAKKTNAGVRR. The span at 11 to 23 shows a compositional bias: gly residues; that stretch reads HGGGTGGGGGAGG. Residues 24–42 show a composition bias toward low complexity; it reads QAMDPAAAGPTKAKKTNAG. Residues 47–138 constitute a DNA-binding region (fork-head); the sequence is EKPPYSYIAL…EFMFEEGSFR (92 aa).

As to expression, expressed primarily in lung in alveolar type II pneumocyte cells, and to a lesser extent in placenta, stomach, intestine and colon.

The protein localises to the nucleus. Probable transcription activator for a number of lung-specific genes. The protein is Forkhead box protein F1 (Foxf1) of Mus musculus (Mouse).